The primary structure comprises 758 residues: 5-methyltetrahydropteroyltriglutamate--homocysteine methyltransferase (758 aa).

5-methyltetrahydropteroyltri-L-glutamate is bound by residues 16 to 19 (RELK) and lysine 112. Residues 433-435 (IGS) and glutamate 486 contribute to the L-homocysteine site. L-methionine is bound by residues 433-435 (IGS) and glutamate 486. 5-methyltetrahydropteroyltri-L-glutamate is bound by residues 517-518 (RC) and tryptophan 563. Aspartate 601 serves as a coordination point for L-homocysteine. Aspartate 601 serves as a coordination point for L-methionine. Glutamate 607 is a 5-methyltetrahydropteroyltri-L-glutamate binding site. Residues histidine 643, cysteine 645, and glutamate 667 each contribute to the Zn(2+) site. The active-site Proton donor is the histidine 696. Cysteine 728 contacts Zn(2+).

The protein belongs to the vitamin-B12 independent methionine synthase family. Zn(2+) is required as a cofactor.

It carries out the reaction 5-methyltetrahydropteroyltri-L-glutamate + L-homocysteine = tetrahydropteroyltri-L-glutamate + L-methionine. It functions in the pathway amino-acid biosynthesis; L-methionine biosynthesis via de novo pathway; L-methionine from L-homocysteine (MetE route): step 1/1. Its function is as follows. Catalyzes the transfer of a methyl group from 5-methyltetrahydrofolate to homocysteine resulting in methionine formation. The chain is 5-methyltetrahydropteroyltriglutamate--homocysteine methyltransferase from Neisseria meningitidis serogroup C / serotype 2a (strain ATCC 700532 / DSM 15464 / FAM18).